A 200-amino-acid chain; its full sequence is Holliday junction branch migration complex subunit RuvA (200 aa).

The segment at 1 to 64 is domain I; sequence MFTYFRGELI…EDLMQLFGFL (64 aa). A domain II region spans residues 65–143; that stretch reads EEEERQLFRL…KLRPSGGTKS (79 aa). A flexible linker region spans residues 144 to 148; the sequence is VSRLS. The domain III stretch occupies residues 148 to 200; the sequence is SESSMRDDAVNALVTLGFLRSVAQKAVTESLTSLRNPQVEDLVRDALLTIRTP.

Belongs to the RuvA family. In terms of assembly, homotetramer. Forms an RuvA(8)-RuvB(12)-Holliday junction (HJ) complex. HJ DNA is sandwiched between 2 RuvA tetramers; dsDNA enters through RuvA and exits via RuvB. An RuvB hexamer assembles on each DNA strand where it exits the tetramer. Each RuvB hexamer is contacted by two RuvA subunits (via domain III) on 2 adjacent RuvB subunits; this complex drives branch migration. In the full resolvosome a probable DNA-RuvA(4)-RuvB(12)-RuvC(2) complex forms which resolves the HJ.

The protein localises to the cytoplasm. Its function is as follows. The RuvA-RuvB-RuvC complex processes Holliday junction (HJ) DNA during genetic recombination and DNA repair, while the RuvA-RuvB complex plays an important role in the rescue of blocked DNA replication forks via replication fork reversal (RFR). RuvA specifically binds to HJ cruciform DNA, conferring on it an open structure. The RuvB hexamer acts as an ATP-dependent pump, pulling dsDNA into and through the RuvAB complex. HJ branch migration allows RuvC to scan DNA until it finds its consensus sequence, where it cleaves and resolves the cruciform DNA. This Chlorobium phaeobacteroides (strain BS1) protein is Holliday junction branch migration complex subunit RuvA.